Here is a 315-residue protein sequence, read N- to C-terminus: Acetyl-coenzyme A carboxylase carboxyl transferase subunit beta, chloroplastic (315 aa).

A CoA carboxyltransferase N-terminal domain is found at 47–315 (LWTRCDSCEN…VYKESNSYLF (269 aa)). Residues cysteine 51, cysteine 54, cysteine 70, and cysteine 73 each coordinate Zn(2+). The C4-type zinc finger occupies 51–73 (CDSCENMLYVRFLKQNKRICEEC).

It belongs to the AccD/PCCB family. In terms of assembly, acetyl-CoA carboxylase is a heterohexamer composed of biotin carboxyl carrier protein, biotin carboxylase and 2 subunits each of ACCase subunit alpha and ACCase plastid-coded subunit beta (accD). Requires Zn(2+) as cofactor.

It is found in the plastid. The protein resides in the chloroplast stroma. It catalyses the reaction N(6)-carboxybiotinyl-L-lysyl-[protein] + acetyl-CoA = N(6)-biotinyl-L-lysyl-[protein] + malonyl-CoA. The protein operates within lipid metabolism; malonyl-CoA biosynthesis; malonyl-CoA from acetyl-CoA: step 1/1. Functionally, component of the acetyl coenzyme A carboxylase (ACC) complex. Biotin carboxylase (BC) catalyzes the carboxylation of biotin on its carrier protein (BCCP) and then the CO(2) group is transferred by the transcarboxylase to acetyl-CoA to form malonyl-CoA. This Physcomitrium patens (Spreading-leaved earth moss) protein is Acetyl-coenzyme A carboxylase carboxyl transferase subunit beta, chloroplastic.